The chain runs to 720 residues: Inactive serine protease PAMR1 (720 aa).

A signal peptide spans 1–21 (MELGWWPQLGLAFLQLLLISS). 8 disulfide bridges follow: cysteine 128-cysteine 150, cysteine 177-cysteine 199, cysteine 239-cysteine 250, cysteine 244-cysteine 260, cysteine 262-cysteine 271, cysteine 280-cysteine 329, cysteine 315-cysteine 342, and cysteine 414-cysteine 442. The region spanning 128-236 (CGQVLRVPKG…DGFHAIFEEI (109 aa)) is the CUB domain. The EGF-like domain occupies 235–272 (EITACSSSPCFHDGTCLLDSTGSYKCACLAGYTGKHCE). Sushi domains are found at residues 278–344 (RNCS…ICIK) and 387–444 (APTK…SCIP). Residues 445–720 (ICGKTENVSA…FKDWIERNMK (276 aa)) form the Peptidase S1 domain. N-linked (GlcNAc...) asparagine glycosylation is present at asparagine 451. Disulfide bonds link cysteine 489-cysteine 505, cysteine 630-cysteine 649, and cysteine 661-cysteine 697.

This sequence belongs to the peptidase S1 family.

It localises to the secreted. Functionally, may play a role in regeneration of skeletal muscle. In Bos taurus (Bovine), this protein is Inactive serine protease PAMR1 (PAMR1).